A 472-amino-acid polypeptide reads, in one-letter code: Adenosylhomocysteinase (472 aa).

Positions 62, 137, and 197 each coordinate substrate. NAD(+) is bound at residue 198–200 (TTT). Positions 227 and 231 each coordinate substrate. NAD(+) is bound by residues N232, 261 to 266 (GYGDVG), E284, N319, 340 to 342 (IGH), and N385.

It belongs to the adenosylhomocysteinase family. NAD(+) is required as a cofactor.

It localises to the cytoplasm. It carries out the reaction S-adenosyl-L-homocysteine + H2O = L-homocysteine + adenosine. Its pathway is amino-acid biosynthesis; L-homocysteine biosynthesis; L-homocysteine from S-adenosyl-L-homocysteine: step 1/1. May play a key role in the regulation of the intracellular concentration of adenosylhomocysteine. This chain is Adenosylhomocysteinase, found in Bordetella pertussis (strain Tohama I / ATCC BAA-589 / NCTC 13251).